The chain runs to 165 residues: MSSSVSSKTRYWVLALAAIVLDQWSKWAVLSSFQYRERVNVIPSFFDLTLVYNPGAAFSFLADQGGWQKYFFLVLAVAVSAYLVRAILRDEFATLGKTGAAMIIGGALGNVIDRLIHGHVVDFLLFYWQNWFYPAFNIADSFICVGAVLAVLDNIVHRKTQEEKY.

Helical transmembrane passes span 11–31 (YWVL…AVLS), 41–61 (VIPS…FSFL), 64–84 (QGGW…AYLV), and 92–112 (FATL…GNVI). Catalysis depends on residues Asp-122 and Asp-140. The helical transmembrane segment at 132–152 (FYPAFNIADSFICVGAVLAVL) threads the bilayer.

The protein belongs to the peptidase A8 family.

Its subcellular location is the cell inner membrane. It carries out the reaction Release of signal peptides from bacterial membrane prolipoproteins. Hydrolyzes -Xaa-Yaa-Zaa-|-(S,diacylglyceryl)Cys-, in which Xaa is hydrophobic (preferably Leu), and Yaa (Ala or Ser) and Zaa (Gly or Ala) have small, neutral side chains.. It functions in the pathway protein modification; lipoprotein biosynthesis (signal peptide cleavage). This protein specifically catalyzes the removal of signal peptides from prolipoproteins. The protein is Lipoprotein signal peptidase of Neisseria meningitidis serogroup A / serotype 4A (strain DSM 15465 / Z2491).